A 348-amino-acid chain; its full sequence is Protein RecA (348 aa).

65–72 (GPESSGKT) lines the ATP pocket.

The protein belongs to the RecA family.

It localises to the cytoplasm. Can catalyze the hydrolysis of ATP in the presence of single-stranded DNA, the ATP-dependent uptake of single-stranded DNA by duplex DNA, and the ATP-dependent hybridization of homologous single-stranded DNAs. It interacts with LexA causing its activation and leading to its autocatalytic cleavage. This chain is Protein RecA, found in Vibrio natriegens.